A 266-amino-acid chain; its full sequence is ATP synthase subunit a (266 aa).

The next 6 membrane-spanning stretches (helical) occupy residues 38–58, 99–119, 126–146, 162–182, 191–211, and 224–244; these read KQML…ILAA, LLFS…IPVI, HVGG…IIGI, GVPW…NFLV, LFAT…GIEF, and SVLV…IMAL.

This sequence belongs to the ATPase A chain family. F-type ATPases have 2 components, CF(1) - the catalytic core - and CF(0) - the membrane proton channel. CF(1) has five subunits: alpha(3), beta(3), gamma(1), delta(1), epsilon(1). CF(0) has three main subunits: a(1), b(2) and c(9-12). The alpha and beta chains form an alternating ring which encloses part of the gamma chain. CF(1) is attached to CF(0) by a central stalk formed by the gamma and epsilon chains, while a peripheral stalk is formed by the delta and b chains.

The protein localises to the cell membrane. Functionally, key component of the proton channel; it plays a direct role in the translocation of protons across the membrane. The protein is ATP synthase subunit a of Paenarthrobacter aurescens (strain TC1).